The sequence spans 282 residues: Hydrogenase expression/formation protein HoxQ (282 aa).

This sequence belongs to the HupH/HyaF family.

The polypeptide is Hydrogenase expression/formation protein HoxQ (hoxQ) (Cupriavidus necator (strain ATCC 17699 / DSM 428 / KCTC 22496 / NCIMB 10442 / H16 / Stanier 337) (Ralstonia eutropha)).